The chain runs to 1373 residues: TAL effector protein PthXo1 (1373 aa).

Disordered regions lie at residues 1-68 and 127-152; these read MDPI…SAGS and AARP…PAAQ. Residues 131-141 show a composition bias toward basic residues; that stretch reads PRAKPAPRRRA. A compositionally biased stretch (low complexity) spans 142–152; it reads AQPSDASPAAQ. The stretch at 221–239 is one Cryptic repeat -1 repeat; the sequence is THEDIVGVGKQWSGARALE. One copy of the Cryptic repeat 0 repeat lies at 256–273; that stretch reads DTGQLVKIAKRGGVTAVE. Core repeat repeat units follow at residues 289–322, 323–356, 357–390, 391–424, 425–458, 459–492, 493–525, 526–559, 560–593, 594–627, 628–661, 662–695, 696–729, 730–763, 764–797, 798–831, 832–865, 866–899, 900–933, 934–967, 968–1001, 1002–1034, and 1035–1068; these read LTPA…QAHG, LPPD…QAHG, LTPD…QAHG, LTPD…QTHG, LTQV…QAHG, LTQE…QAHG, LTPA…QDHG, LTLA…QAHG, LTQD…QDHG, LTPD…QDHG, and LTLD…QDHG. 4 HEAT repeats span residues 714–760, 782–828, 850–893, and 918–961; these read LETV…VLCQ and LETV…LLPV. The HEAT 5 repeat unit spans residues 1053 to 1091; sequence LETVQRLLPVLCQDHGLTPNQVVAIASNGGKQALESIVA. The Core repeat 23.5 repeat unit spans residues 1069–1087; sequence LTPNQVVAIASNGGKQALE. The tract at residues 1136–1364 is acidic activation domain; that stretch reads RVNRRIGERT…ELAWLMELLP (229 aa). A Nuclear localization signal NLS1 motif is present at residues 1222–1225; the sequence is KRAK. Positions 1250-1286 are disordered; the sequence is LDAPSPMHEGDQTGASSRKRSRSDRAVTGPSAQHSFE. The Nuclear localization signal NLS2 signature appears at 1268–1271; the sequence is KRSR. Residues 1305–1308 carry the Nuclear localization signal NLS3 motif; that stretch reads KRPR.

Belongs to the transcription activator-like effector (TALE) family.

It localises to the secreted. The protein resides in the host nucleus. Avirulence protein. Acts as a transcription factor in rice, inducing expression of a number of host genes including SWEET11 (Os8N3, XA13, AC Q6YZF3) in susceptible plants with the Xa13 allele. Plants with the xa13 allele, which has an altered promoter, are resistant to bacterial blight caused by this bacterial strain and do not induce SWEET11. The xa13 allele elicits an atypical hypersensitive response (HR). PthXo1 binds SWEET11 promoter DNA in a sequence-specific manner. The protein is TAL effector protein PthXo1 (pthXo1) of Xanthomonas oryzae pv. oryzae (strain PXO99A).